Reading from the N-terminus, the 125-residue chain is SOSS complex subunit C homolog A (125 aa).

A compositionally biased stretch (polar residues) spans M1–K16. Disordered stretches follow at residues M1–E20, S38–N74, and P105–K125.

The protein belongs to the SOSS-C family.

The sequence is that of SOSS complex subunit C homolog A from Drosophila willistoni (Fruit fly).